The following is a 234-amino-acid chain: Cyclo(L-leucyl-L-leucyl) synthase (234 aa).

The active-site Nucleophile is Ser-33. Substrate is bound by residues Asn-36, 179–183 (YIFAE), Tyr-203, and 208–209 (SI).

The protein belongs to the CDPS family.

It carries out the reaction 2 L-leucyl-tRNA(Leu) = cyclo(L-leucyl-L-leucyl) + 2 tRNA(Leu) + 2 H(+). Its function is as follows. It uses activated amino acids in the form of aminoacyl-tRNAs (aa-tRNAs) as substrates to catalyze the ATP-independent formation of cyclodipeptides which are intermediates in diketopiperazine (DKP) biosynthetic pathways. Catalyzes the formation of cyclo(L-Leu-L-Leu) (cLL) from L-leucyl-tRNA(Leu). Can incorporate various nonpolar residues, such as L-phenylalanine, L-leucine and L-methionine, into cyclodipeptides. The chain is Cyclo(L-leucyl-L-leucyl) synthase from Photorhabdus laumondii subsp. laumondii (strain DSM 15139 / CIP 105565 / TT01) (Photorhabdus luminescens subsp. laumondii).